The primary structure comprises 85 residues: Large ribosomal subunit protein bL27 (85 aa).

The tract at residues methionine 1–methionine 20 is disordered.

Belongs to the bacterial ribosomal protein bL27 family.

The chain is Large ribosomal subunit protein bL27 from Psychrobacter arcticus (strain DSM 17307 / VKM B-2377 / 273-4).